A 432-amino-acid chain; its full sequence is E3 ubiquitin-protein ligase RNF135 (432 aa).

The RING-type zinc-finger motif lies at 21–63 (CIICQGLLDWPATLPCGHSFCRHCLEALWGARDARRWACPTCR). The interval 95–121 (GSDPAHCPCPGSSSLSSAAARPRRRPE) is disordered. The segment covering 102–114 (PCPGSSSLSSAAA) has biased composition (low complexity). Coiled coils occupy residues 121–156 (ELQRVAVEKSITEVAQELTELVEHLVDIVRSLQNQR) and 191–216 (DTAAGKIRDILHDLEEIQEKLQESVT). The region spanning 241–432 (PDQSHPALRR…NYLIIKQVKV (192 aa)) is the B30.2/SPRY domain.

Homodimer. Interacts (homodimer) with RIGI (double-stranded RNA-bound oligomeric form); involved in both RIGI ubiquitination, oligomerization into filaments associated with viral RNAs and the bridging of these filaments. Interacts with UBE2D3 and UBE2N; E2 ubiquitin ligases involved in RNF135-mediated ubiquitination of RIGI and activation of the RIG-I signaling pathway. Interacts with PCBP2. In terms of processing, (Microbial infection) Cleaved and inactivated by hepatitis C virus NS3/NS4A. As to expression, expressed in skeletal muscle, spleen, kidney, placenta, prostate, stomach, thyroid and tongue. Also weakly expressed in heart, thymus, liver and lung.

It localises to the cytoplasm. The protein localises to the stress granule. It catalyses the reaction S-ubiquitinyl-[E2 ubiquitin-conjugating enzyme]-L-cysteine + [acceptor protein]-L-lysine = [E2 ubiquitin-conjugating enzyme]-L-cysteine + N(6)-ubiquitinyl-[acceptor protein]-L-lysine.. It functions in the pathway protein modification; protein ubiquitination. E2-dependent E3 ubiquitin-protein ligase that functions as a RIGI coreceptor in the sensing of viral RNAs in cell cytoplasm and the activation of the antiviral innate immune response. Together with the UBE2D3, UBE2N and UB2V1 E2 ligases, catalyzes the 'Lys-63'-linked polyubiquitination of RIGI oligomerized on viral RNAs, an essential step in the activation of the RIG-I signaling pathway. Through a ubiquitin-independent parallel mechanism, which consists in bridging RIGI filaments forming on longer viral RNAs, further activates the RIG-I signaling pathway. This second mechanism that synergizes with the ubiquitin-dependent one would thereby allow an RNA length-dependent regulation of the RIG-I signaling pathway. Associated with the E2 ligase UBE2N, also constitutively synthesizes unanchored 'Lys-63'-linked polyubiquitin chains that may also activate the RIG-I signaling pathway. This Homo sapiens (Human) protein is E3 ubiquitin-protein ligase RNF135.